Reading from the N-terminus, the 352-residue chain is Phosphoribosylformylglycinamidine cyclo-ligase (352 aa).

It belongs to the AIR synthase family.

The protein localises to the cytoplasm. The catalysed reaction is 2-formamido-N(1)-(5-O-phospho-beta-D-ribosyl)acetamidine + ATP = 5-amino-1-(5-phospho-beta-D-ribosyl)imidazole + ADP + phosphate + H(+). It participates in purine metabolism; IMP biosynthesis via de novo pathway; 5-amino-1-(5-phospho-D-ribosyl)imidazole from N(2)-formyl-N(1)-(5-phospho-D-ribosyl)glycinamide: step 2/2. This chain is Phosphoribosylformylglycinamidine cyclo-ligase, found in Pseudomonas putida (strain GB-1).